Here is a 248-residue protein sequence, read N- to C-terminus: MTSQPVPNETIIVLPSNVINFSQAEKPEPTNQGQDSLKKHLHAEIKVIGTIQILCGMMVLSLGIILASASFSPNFTQVTSTLLNSAYPFIGPFFFIISGSLSIATEKRLTKLLVHSSLVGSILSALSALVGFIILSVKQATLNPASLQCELDKNNIPTRSYVSYFYHDSLYTTDCYTAKASLAGTLSLMLICTLLEFCLAVLTAVLRWKQAYSDFPGSVLFLPHSYIGNSGMSSKMTHDCGYEELLTS.

The Cytoplasmic segment spans residues 1–46 (MTSQPVPNETIIVLPSNVINFSQAEKPEPTNQGQDSLKKHLHAEIK). A helical transmembrane segment spans residues 47-67 (VIGTIQILCGMMVLSLGIILA). Residues 68-84 (SASFSPNFTQVTSTLLN) are Extracellular-facing. A helical transmembrane segment spans residues 85-105 (SAYPFIGPFFFIISGSLSIAT). Topologically, residues 106-116 (EKRLTKLLVHS) are cytoplasmic. The chain crosses the membrane as a helical span at residues 117-137 (SLVGSILSALSALVGFIILSV). The Extracellular portion of the chain corresponds to 138 to 185 (KQATLNPASLQCELDKNNIPTRSYVSYFYHDSLYTTDCYTAKASLAGT). The helical transmembrane segment at 186–206 (LSLMLICTLLEFCLAVLTAVL) threads the bilayer. At 207–248 (RWKQAYSDFPGSVLFLPHSYIGNSGMSSKMTHDCGYEELLTS) the chain is on the cytoplasmic side.

Belongs to the MS4A family. In terms of tissue distribution, variable expression in some B-cell, myelomonocytic, and erythroleukemia cell lines.

The protein resides in the membrane. May be involved in signal transduction as a component of a multimeric receptor complex. The chain is Membrane-spanning 4-domains subfamily A member 6A (MS4A6A) from Homo sapiens (Human).